A 97-amino-acid polypeptide reads, in one-letter code: M-zodatoxin-Lt7a (97 aa).

The N-terminal stretch at M1 to S22 is a signal peptide. Positions V23 to R63 are excised as a propeptide. Positions E60–R63 match the Processing quadruplet motif motif.

Post-translationally, cleavage of the propeptide depends on the processing quadruplet motif (XXXR, with at least one of X being E). Expressed by the venom gland.

Its subcellular location is the secreted. In terms of biological role, does not have antimicrobial or antifungal activity. Does not have hemolytic activity against rabbit erythrocytes. However, it causes some conductance changes in planar bilayer membranes, without membrane rupture, suggesting a cytolytic function on other biological targets. It causes paralysis, but is not lethal when injected into insect (M.domestica) larvae. In Lachesana tarabaevi (Spider), this protein is M-zodatoxin-Lt7a.